Reading from the N-terminus, the 673-residue chain is Probable boron transporter 7 (673 aa).

The Cytoplasmic portion of the chain corresponds to 1-35 (MEGVKFPFGGIINDFNGRRKCYKQDWLAAFNSGVR). The helical transmembrane segment at 36 to 56 (ILAPTLYIFIASALPVIAFGE) threads the bilayer. Topologically, residues 57 to 75 (QLSRETDRSLGIAESLAST) are extracellular. The helical transmembrane segment at 76 to 96 (ALCGIIHSVFGGQPLLIVGVA) threads the bilayer. At 97–121 (EPTIIMYTYLHSFSKSRPELGQKLY) the chain is on the cytoplasmic side. Residues 122 to 142 (LAWAGWVCVWTAVLLMLLAML) form a helical membrane-spanning segment. Residues 143 to 160 (NACNIISRFTRIAGELFG) lie on the Extracellular side of the membrane. The helical transmembrane segment at 161–181 (MLITVLFIQEAVKGLIGEFLV) threads the bilayer. Residues 182–197 (PKSDDPSLEVYQFQWR) are Cytoplasmic-facing. Residues 198–218 (YTNGLLAVIFSFGLLYTALKS) traverse the membrane as a helical segment. Topologically, residues 219-233 (RRARSWKYGFRWMRG) are extracellular. The helical transmembrane segment at 234–254 (FIGDYGTLLMLVLWSAFSYTV) threads the bilayer. The Cytoplasmic segment spans residues 255–289 (PRNLPEGVPRRLELPLPWASESLYHWTVVKDMAKV). The helical transmembrane segment at 290–310 (PPLYILAAFIPAIMIAGLYFF) threads the bilayer. Over 311-330 (DHCVSAQMAQQKEFNLKNPT) the chain is Extracellular. Residues 331–351 (AYHYDIFILGIMTLICGLLGL) traverse the membrane as a helical segment. Residues 352–468 (PPSNGVIPQS…EQRVSNLLQS (117 aa)) are Cytoplasmic-facing. The helical transmembrane segment at 469-489 (VLVGLLILAVPVLRMIPTSVL) threads the bilayer. Topologically, residues 490 to 556 (WGYFTYMAVD…QLLYFLICYG (67 aa)) are extracellular. A helical membrane pass occupies residues 557–577 (VTWIPVGGILFPLPFFILIAL). Residues 578–673 (RQYILQRLFD…SQMVKIYNHS (96 aa)) lie on the Cytoplasmic side of the membrane.

It belongs to the anion exchanger (TC 2.A.31.3) family.

Its subcellular location is the membrane. In terms of biological role, putative boron transporter. Boron is essential for maintaining the integrity of plants cell walls. This is Probable boron transporter 7 (BOR7) from Arabidopsis thaliana (Mouse-ear cress).